We begin with the raw amino-acid sequence, 303 residues long: Probable cell division protein WhiA (303 aa).

Positions 272 to 303 form a DNA-binding region, H-T-H motif; sequence SIQQLADSLSKPLTKSGVNHRLRKINKIADEL.

It belongs to the WhiA family.

Involved in cell division and chromosome segregation. The chain is Probable cell division protein WhiA from Streptococcus gordonii (strain Challis / ATCC 35105 / BCRC 15272 / CH1 / DL1 / V288).